Here is a 535-residue protein sequence, read N- to C-terminus: Putative beta-glucosidase 41 (535 aa).

Residues 1–27 (MESLMRLVLVLFPFFVVFFVPLDHVSS) form the signal peptide. Position 49 (Gln49) interacts with a beta-D-glucoside. The N-linked (GlcNAc...) asparagine glycan is linked to Asn118. A beta-D-glucoside contacts are provided by residues His151 and 196–197 (NE). Glu197 serves as the catalytic Proton donor. Residues Cys216 and Cys224 are joined by a disulfide bond. A beta-D-glucoside contacts are provided by Tyr340 and Glu413. The active-site Nucleophile is Glu413. Asn445 is a glycosylation site (N-linked (GlcNAc...) asparagine). Residues Trp463, 470–471 (EW), and Phe479 each bind a beta-D-glucoside. A glycan (N-linked (GlcNAc...) asparagine) is linked at Asn489.

Belongs to the glycosyl hydrolase 1 family.

It catalyses the reaction Hydrolysis of terminal, non-reducing beta-D-glucosyl residues with release of beta-D-glucose.. In Arabidopsis thaliana (Mouse-ear cress), this protein is Putative beta-glucosidase 41.